We begin with the raw amino-acid sequence, 94 residues long: MLKPLGDRVVIELVESEEKTASGIVLPDSAKEKPQEGKIVAAGSGRVLESGERVALEVKEGDRIIFSKYAGTEVKYEGTEYLILRESDILAVIG.

Belongs to the GroES chaperonin family. In terms of assembly, heptamer of 7 subunits arranged in a ring. Interacts with the chaperonin GroEL.

The protein resides in the cytoplasm. In terms of biological role, together with the chaperonin GroEL, plays an essential role in assisting protein folding. The GroEL-GroES system forms a nano-cage that allows encapsulation of the non-native substrate proteins and provides a physical environment optimized to promote and accelerate protein folding. GroES binds to the apical surface of the GroEL ring, thereby capping the opening of the GroEL channel. This Bacillus subtilis (strain 168) protein is Co-chaperonin GroES.